Here is a 160-residue protein sequence, read N- to C-terminus: Cytochrome b6-f complex subunit 4 (160 aa).

3 helical membrane passes run 36-56 (LLYI…GLAV), 95-115 (LLGV…PFLE), and 131-151 (TVFL…TLPI).

This sequence belongs to the cytochrome b family. PetD subfamily. As to quaternary structure, the 4 large subunits of the cytochrome b6-f complex are cytochrome b6, subunit IV (17 kDa polypeptide, petD), cytochrome f and the Rieske protein, while the 4 small subunits are petG, petL, petM and petN. The complex functions as a dimer.

The protein localises to the plastid. The protein resides in the chloroplast thylakoid membrane. Its function is as follows. Component of the cytochrome b6-f complex, which mediates electron transfer between photosystem II (PSII) and photosystem I (PSI), cyclic electron flow around PSI, and state transitions. This chain is Cytochrome b6-f complex subunit 4, found in Saccharum hybrid (Sugarcane).